The sequence spans 128 residues: Ribosome-binding factor A (128 aa).

The protein belongs to the RbfA family. Monomer. Binds 30S ribosomal subunits, but not 50S ribosomal subunits or 70S ribosomes.

The protein resides in the cytoplasm. In terms of biological role, one of several proteins that assist in the late maturation steps of the functional core of the 30S ribosomal subunit. Associates with free 30S ribosomal subunits (but not with 30S subunits that are part of 70S ribosomes or polysomes). Required for efficient processing of 16S rRNA. May interact with the 5'-terminal helix region of 16S rRNA. In Geobacillus thermodenitrificans (strain NG80-2), this protein is Ribosome-binding factor A.